We begin with the raw amino-acid sequence, 307 residues long: Ribonuclease Z (307 aa).

Residues histidine 63, histidine 65, aspartate 67, histidine 68, histidine 141, aspartate 212, and histidine 270 each contribute to the Zn(2+) site. Residue aspartate 67 is the Proton acceptor of the active site.

This sequence belongs to the RNase Z family. As to quaternary structure, homodimer. Requires Zn(2+) as cofactor.

The catalysed reaction is Endonucleolytic cleavage of RNA, removing extra 3' nucleotides from tRNA precursor, generating 3' termini of tRNAs. A 3'-hydroxy group is left at the tRNA terminus and a 5'-phosphoryl group is left at the trailer molecule.. In terms of biological role, zinc phosphodiesterase, which displays some tRNA 3'-processing endonuclease activity. Probably involved in tRNA maturation, by removing a 3'-trailer from precursor tRNA. This chain is Ribonuclease Z, found in Bacillus cereus (strain ZK / E33L).